The primary structure comprises 252 residues: 5-oxoprolinase subunit A (252 aa).

The protein belongs to the LamB/PxpA family. In terms of assembly, forms a complex composed of PxpA, PxpB and PxpC.

The enzyme catalyses 5-oxo-L-proline + ATP + 2 H2O = L-glutamate + ADP + phosphate + H(+). Functionally, catalyzes the cleavage of 5-oxoproline to form L-glutamate coupled to the hydrolysis of ATP to ADP and inorganic phosphate. The sequence is that of 5-oxoprolinase subunit A from Corynebacterium glutamicum (strain ATCC 13032 / DSM 20300 / JCM 1318 / BCRC 11384 / CCUG 27702 / LMG 3730 / NBRC 12168 / NCIMB 10025 / NRRL B-2784 / 534).